The sequence spans 677 residues: Probable sulfate transporter 4.2 (677 aa).

Topologically, residues 1–83 (MSLAVKDLST…RTYRWHQYFK (83 aa)) are cytoplasmic. Residues 84–104 (LDLMAGITVGIMLVPQAMSYA) traverse the membrane as a helical segment. Topologically, residues 105 to 108 (RLAG) are extracellular. Residues 109–129 (LQPIYGLYSSFVPVFVYAVFG) traverse the membrane as a helical segment. Residues 130-133 (SSRQ) lie on the Cytoplasmic side of the membrane. The helical transmembrane segment at 134–154 (LAVGPVALVSLLVSNALSGIV) threads the bilayer. The Extracellular portion of the chain corresponds to 155–161 (DPSEELY). A helical membrane pass occupies residues 162-182 (TELAILLALMVGIFESIMGFL). Residues 183–189 (RLGWLIR) lie on the Cytoplasmic side of the membrane. The chain crosses the membrane as a helical span at residues 190-210 (FISHSVISGFTTASAVVIGLS). The Extracellular portion of the chain corresponds to 211 to 241 (QLKYFLGYSVSRSSKIMPVIDSIIAGADQFK). A helical membrane pass occupies residues 242–262 (WPPFLLGCTILVILLVMKHVG). Topologically, residues 263–269 (KAKKELR) are cytoplasmic. The helical transmembrane segment at 270 to 290 (FIRAAGPLTGLALGTIIAKVF) threads the bilayer. Residues 291–318 (HPPSITLVGDIPQGLPKFSFPKSFDHAK) lie on the Extracellular side of the membrane. Residues 319 to 339 (LLLPTSALITGVAILESVGIA) form a helical membrane-spanning segment. Over 340–355 (KALAAKNRYELDSNSE) the chain is Cytoplasmic. A helical transmembrane segment spans residues 356–376 (LFGLGVANIFGSLFSAYPTTG). Residues 377–392 (SFSRSAVNSESEAKTG) are Extracellular-facing. A helical transmembrane segment spans residues 393–413 (LSGLVTGIIIGCSLLFLTPMF). Topologically, residues 414–420 (KFIPQCA) are cytoplasmic. Residues 421–441 (LAAIVISAVSGLVDYEGAIFL) traverse the membrane as a helical segment. Residues 442–459 (WRVDKRDFTLWTITSTTT) lie on the Extracellular side of the membrane. Residues 460-480 (LFFGIEIGVLIGVGFSLAFVI) form a helical membrane-spanning segment. Over 481–677 (HESANPHIAV…LEEPLLSREK (197 aa)) the chain is Cytoplasmic. An STAS domain is found at 505-629 (QYPEAYTYNG…VRVHDAVQVC (125 aa)).

The protein belongs to the SLC26A/SulP transporter (TC 2.A.53) family.

It is found in the membrane. H(+)/sulfate cotransporter that may play a role in the regulation of sulfate assimilation. This is Probable sulfate transporter 4.2 (SULTR4;2) from Arabidopsis thaliana (Mouse-ear cress).